The sequence spans 151 residues: Superoxide dismutase [Cu-Zn] (151 aa).

C6 is lipidated: S-palmitoyl cysteine. Cu cation contacts are provided by H45, H47, and H62. The cysteines at positions 56 and 144 are disulfide-linked. Residues H62, H70, H79, and D82 each contribute to the Zn(2+) site. Position 118 (H118) interacts with Cu cation.

The protein belongs to the Cu-Zn superoxide dismutase family. As to quaternary structure, homodimer. Cu cation serves as cofactor. It depends on Zn(2+) as a cofactor.

Its subcellular location is the cytoplasm. The protein localises to the nucleus. The enzyme catalyses 2 superoxide + 2 H(+) = H2O2 + O2. Its function is as follows. Destroys radicals which are normally produced within the cells and which are toxic to biological systems. This is Superoxide dismutase [Cu-Zn] (sod1) from Xenopus tropicalis (Western clawed frog).